A 117-amino-acid chain; its full sequence is MKWMFKEDHSLEHRCVESAKIRAKYPDRVPVIVEKVSGSQIVDIDKRKYLVPSDITVAQFMWIIRKRIQLPSEKAIFLFVDKTVPQSSLTMGQLYEKEKDEDGFLYVAYSGENTFGF.

Lys24 carries the post-translational modification N6-acetyllysine. A phosphoserine mark is found at Ser39, Ser87, and Ser88. The Phosphatidylethanolamine amidated glycine; alternate moiety is linked to residue Gly116. Gly116 carries the Phosphatidylserine amidated glycine; alternate lipid modification. Phe117 is a propeptide (removed in mature form).

The protein belongs to the ATG8 family. In terms of assembly, monomer. Interacts with ATG3, ATG7, ATG13 and ULK1. Interacts with TP53INP1 and TP53INP2. Interacts with TBC1D25. Directly interacts with SQSTM1 and BNIP3. Interacts with TECPR2 and PCM1. Interacts with TBC1D5. Interacts with TRIM5. Interacts with MEFV and TRIM21. Interacts with WDFY3. Interacts with UBA5; promoting recruitment of UBA5 to the endoplasmic reticulum membrane. Interacts with GOSR1. Interacts with KBTBD6 and KBTBD7; the interaction is direct. Interacts with reticulophagy regulators RETREG1, RETREG2 and RETREG3. Interacts with IRGM. Interacts with DNM2. Interacts with NCOA4. Interacts with IRGQ. The precursor molecule is cleaved by ATG4 (ATG4A, ATG4B, ATG4C or ATG4D) to expose the glycine at the C-terminus and form the cytosolic form, GABARAPL2-I. The processed form is then activated by APG7L/ATG7, transferred to ATG3 and conjugated to phosphatidylethanolamine (PE) phospholipid to form the membrane-bound form, GABARAPL2-II. During non-canonical autophagy, the processed form is conjugated to phosphatidylserine (PS) phospholipid. ATG4 proteins also mediate the delipidation of PE-conjugated forms required for GABARAPL2 recycling when autophagosomes fuse with lysosomes. In addition, ATG4B and ATG4D mediate delipidation of ATG8 proteins conjugated to PS during non-canonical autophagy. ATG4B constitutes the major protein for proteolytic activation. ATG4D is the main enzyme for delipidation activity. In terms of processing, phosphorylation at Ser-87 and Ser-88 by TBK1 prevents interaction with ATG4 (ATG4A, ATG4B, ATG4C or ATG4D). Phosphorylation by TBK1 on autophagosomes prevents their delipidation by ATG4 and premature removal from nascent autophagosomes. As to expression, ubiquitous. Expressed at high levels in the brain, heart, prostate, ovary, spleen and skeletal muscle. Expressed at very low levels in lung, thymus and small intestine.

Its subcellular location is the cytoplasmic vesicle. It is found in the autophagosome. The protein resides in the endoplasmic reticulum membrane. The protein localises to the golgi apparatus. Ubiquitin-like modifier involved in intra-Golgi traffic. Modulates intra-Golgi transport through coupling between NSF activity and SNAREs activation. It first stimulates the ATPase activity of NSF which in turn stimulates the association with GOSR1. Involved in autophagy. Plays a role in mitophagy which contributes to regulate mitochondrial quantity and quality by eliminating the mitochondria to a basal level to fulfill cellular energy requirements and preventing excess ROS production. Whereas LC3s are involved in elongation of the phagophore membrane, the GABARAP/GATE-16 subfamily is essential for a later stage in autophagosome maturation. This Bos taurus (Bovine) protein is Gamma-aminobutyric acid receptor-associated protein-like 2.